We begin with the raw amino-acid sequence, 457 residues long: G-protein coupled receptor 135 (457 aa).

The interval 1-26 (MEEQARPPGRPAASATLQGSAHPGGA) is disordered. At 1 to 64 (MEEQARPPGR…EAAGSRGPAP (64 aa)) the chain is on the extracellular side. A glycan (N-linked (GlcNAc...) asparagine) is linked at N47. A helical membrane pass occupies residues 65–85 (LLWHGAAVAAQALVLLLIFLL). Topologically, residues 86–109 (SSLGNCAVMGVIVKHRQLRTVTNA) are cytoplasmic. Residues 110–130 (FILSLSLSDLLTALLCLPAAF) form a helical membrane-spanning segment. Residues 131 to 156 (LDLFAPPGDSGPWRSFCAASRFFSSC) are Extracellular-facing. Residues 157–177 (FGIVSTFSVALISLDRYCAIV) form a helical membrane-spanning segment. Topologically, residues 178 to 189 (RPPRDKLGRRRA) are cytoplasmic. Residues 190 to 210 (LQLLAGAWLAALGFSLPWDLL) form a helical membrane-spanning segment. Residues 211–235 (RAPREPPAPQSFHRCLYRTSPDPAQ) lie on the Extracellular side of the membrane. Residues 236 to 256 (LGVAYSVGLVVACYLLPFLLM) traverse the membrane as a helical segment. Residues 257–295 (CFCRYHICKTVRLSDVRVRPMTTYARVLRFFSEVRTATT) are Cytoplasmic-facing. Residues 296-316 (VLIMIIFVMCCWGPYCFLVLL) form a helical membrane-spanning segment. Residues 317 to 329 (AATRQGQATQAPS) lie on the Extracellular side of the membrane. A helical membrane pass occupies residues 330–350 (LLNVAAVWLTWANGAINPVIY). Residues 351–457 (AIRNPNISML…HNSETRDSSI (107 aa)) lie on the Cytoplasmic side of the membrane.

The protein belongs to the G-protein coupled receptor 1 family. In terms of assembly, interacts with MTNR1B. Interacts with ARRB1 and ARRB2 in a spontaneous and agonist-independent manner; leading to the internalization of GPR135 in the endosomal compartment.

The protein localises to the cell membrane. The protein resides in the endosome membrane. Functionally, orphan receptor. Has spontaneous activity for beta-arrestin recruitment. Shows a reciprocal regulatory interaction with the melatonin receptor MTNR1B most likely through receptor heteromerization. This is G-protein coupled receptor 135 (Gpr135) from Mus musculus (Mouse).